The chain runs to 196 residues: Probable malonic semialdehyde reductase RutE (196 aa).

This sequence belongs to the nitroreductase family. HadB/RutE subfamily. Requires FMN as cofactor.

The enzyme catalyses 3-hydroxypropanoate + NADP(+) = 3-oxopropanoate + NADPH + H(+). May reduce toxic product malonic semialdehyde to 3-hydroxypropionic acid, which is excreted. The protein is Probable malonic semialdehyde reductase RutE of Escherichia coli O81 (strain ED1a).